A 284-amino-acid polypeptide reads, in one-letter code: Elongation factor Ts (284 aa).

The interval 80–83 (TDFV) is involved in Mg(2+) ion dislocation from EF-Tu.

This sequence belongs to the EF-Ts family.

It is found in the cytoplasm. Functionally, associates with the EF-Tu.GDP complex and induces the exchange of GDP to GTP. It remains bound to the aminoacyl-tRNA.EF-Tu.GTP complex up to the GTP hydrolysis stage on the ribosome. The polypeptide is Elongation factor Ts (Neisseria meningitidis serogroup C (strain 053442)).